Reading from the N-terminus, the 317-residue chain is Retinol dehydrogenase 16 (317 aa).

An NAD(+)-binding site is contributed by 33-57; that stretch reads FITGCDSGFGTLLARQLDRRGMRVL. Catalysis depends on tyrosine 176, which acts as the Proton acceptor. Residues 289–309 form a helical membrane-spanning segment; the sequence is LFYLPLSYLPTFLVDALLYWT.

This sequence belongs to the short-chain dehydrogenases/reductases (SDR) family. As to quaternary structure, homodimer. Not glycosylated.

It localises to the endoplasmic reticulum membrane. Its subcellular location is the microsome membrane. It carries out the reaction all-trans-retinol--[retinol-binding protein] + NAD(+) = all-trans-retinal--[retinol-binding protein] + NADH + H(+). It catalyses the reaction 9-cis-retinol + NAD(+) = 9-cis-retinal + NADH + H(+). The enzyme catalyses 11-cis-retinol + NAD(+) = 11-cis-retinal + NADH + H(+). The catalysed reaction is 13-cis-retinol + NAD(+) = 13-cis-retinal + NADH + H(+). It carries out the reaction androsterone + NAD(+) = 5alpha-androstan-3,17-dione + NADH + H(+). It catalyses the reaction 5alpha-androstane-3alpha,17beta-diol + NAD(+) = 17beta-hydroxy-5alpha-androstan-3-one + NADH + H(+). It functions in the pathway cofactor metabolism; retinol metabolism. In terms of biological role, oxidoreductase with a preference for NAD. Oxidizes all-trans-retinol, 9-cis-retinol, 11-cis-retinol and 13-cis-retinol to the corresponding aldehydes. Has higher activity towards CRBP-bound retinol than with free retinol. Oxidizes 3-alpha-hydroxysteroids. Oxidizes androstanediol and androsterone to dihydrotestosterone and androstanedione. Can also catalyze the reverse reaction. The sequence is that of Retinol dehydrogenase 16 from Mus musculus (Mouse).